The primary structure comprises 2748 residues: Nuclear migration protein NUM1 (2748 aa).

Positions Met1–Asn10 are enriched in basic residues. Disordered stretches follow at residues Met1 to Asn36 and Tyr290 to Ser312. Over residues Ala17–Asn36 the composition is skewed to polar residues. A compositionally biased stretch (low complexity) spans Lys293–Asp304. 12 tandem repeats follow at residues Pro593–Gln656, Pro657–Gln727, Pro728–Gln798, Pro799–Gln862, Pro863–Gln926, Pro927–Gln990, Pro991–Gln1054, Pro1055–Gln1118, Pro1119–Gln1182, Pro1183–Gln1246, Pro1247–Gln1310, and Pro1311–Gln1374. The interval Pro593 to Ala1384 is 13 X tandem repeats. Phosphoserine is present on residues Ser611, Ser675, and Ser746. Residues Ser881, Ser945, and Ser1009 each carry the phosphoserine modification. 3 positions are modified to phosphoserine: Ser1201, Ser1265, and Ser1329. A 13; truncated repeat occupies Pro1375 to Ala1384. The interval Glu2111–Ser2133 is disordered. The segment covering Asn2122–Ser2133 has biased composition (low complexity). 8 positions are modified to phosphoserine: Ser2162, Ser2164, Ser2197, Ser2217, Ser2220, Ser2221, Ser2360, and Ser2424. Positions Lys2444 to Ser2460 are enriched in basic and acidic residues. Residues Lys2444 to Arg2536 form a disordered region. The segment covering Asn2465–Ser2474 has biased composition (polar residues). Basic and acidic residues predominate over residues Ser2492–His2503. At Ser2494 the chain carries Phosphoserine. Positions Arg2504–Gln2514 are enriched in basic residues. The segment covering Ser2516–Thr2532 has biased composition (low complexity). A Phosphoserine modification is found at Ser2545. The PH domain maps to Gln2573–Gln2683. The interval Ile2707 to Arg2748 is disordered. Residues Lys2720–Ser2730 show a composition bias toward low complexity.

In terms of assembly, interacts with PAC11 when DYN1 is present, and TUB3.

The protein localises to the bud tip. In terms of biological role, controls nuclear migration. NUM1 specifically controls the interaction of the bud neck cytoskeleton with the pre-divisional G2 nucleus. Functions in dynein-anchoring. During late anaphase forms dynein-interacting cortical microtubule capture sites at both cellular poles. This leads to dynein-dependent sliding of the microtubules in the bud. The chain is Nuclear migration protein NUM1 (NUM1) from Saccharomyces cerevisiae (strain ATCC 204508 / S288c) (Baker's yeast).